Here is a 331-residue protein sequence, read N- to C-terminus: MSDILAVAREQVLERGVGLDQDQTLQVLQLPDDRLDELLALAHEVRMAHCGPDVEVEGIISLKTGGCPEDCHFCSQSGLFASPVRSAWLDVPSLVEAAKQTAKTGATEFCIVAAVRGPDERLLAQVAAGIEAIRNEVDIQIACSLGMLTQDQVERLSAMGVHRYNHNLETARSFFTNVVTTHSWEERWETLQMVREAGMEVCCGGILGMGESLGQRAEFAANLAELDPHEVPLNFLNPRPGTPFGDLEVLPATEALKAVAAFRLALPRTMLRFAGGREITLGDLGAKQGILGGINAVIVGNYLTTLGRPAEADLQLLDDLQMPIKALNATL.

In terms of domain architecture, Radical SAM core spans 52–277 (PDVEVEGIIS…RTMLRFAGGR (226 aa)). [4Fe-4S] cluster-binding residues include cysteine 67, cysteine 71, and cysteine 74. [2Fe-2S] cluster-binding residues include cysteine 110, cysteine 143, cysteine 202, and arginine 272.

It belongs to the radical SAM superfamily. Biotin synthase family. In terms of assembly, homodimer. The cofactor is [4Fe-4S] cluster. [2Fe-2S] cluster serves as cofactor.

The catalysed reaction is (4R,5S)-dethiobiotin + (sulfur carrier)-SH + 2 reduced [2Fe-2S]-[ferredoxin] + 2 S-adenosyl-L-methionine = (sulfur carrier)-H + biotin + 2 5'-deoxyadenosine + 2 L-methionine + 2 oxidized [2Fe-2S]-[ferredoxin]. Its pathway is cofactor biosynthesis; biotin biosynthesis; biotin from 7,8-diaminononanoate: step 2/2. Functionally, catalyzes the conversion of dethiobiotin (DTB) to biotin by the insertion of a sulfur atom into dethiobiotin via a radical-based mechanism. In Mycolicibacterium gilvum (strain PYR-GCK) (Mycobacterium gilvum (strain PYR-GCK)), this protein is Biotin synthase.